A 516-amino-acid polypeptide reads, in one-letter code: Melianol synthase CYP71BQ17 (516 aa).

Residues 14 to 34 (MPHLPSLPVSLSFLLFFLMLV) form a helical membrane-spanning segment. Position 454 (cysteine 454) interacts with heme.

The protein belongs to the cytochrome P450 family. Heme is required as a cofactor. As to expression, mainly expressed in roots and, to a lesser extent, in stems and old leaves.

It localises to the membrane. It carries out the reaction dihydroniloticin + 2 reduced [NADPH--hemoprotein reductase] + 2 O2 = melianol + 2 oxidized [NADPH--hemoprotein reductase] + 3 H2O + 2 H(+). The protein operates within secondary metabolite biosynthesis; terpenoid biosynthesis. Functionally, monooxygenase involved in the biosynthesis of quassinoids triterpene natural products such as ailanthone, chaparrinone, glaucarubinone and amarolide, allelopathic degraded triterpene lactones inhibiting the growth of other plants, and possessing antimalarial, antifeedant, insecticidal, anti-inflammatory and anticancer activities. Catalyzes the conversion of dihydroniloticin to the protolimonoid melianol. This is Melianol synthase CYP71BQ17 from Ailanthus altissima (Tree-of-heaven).